We begin with the raw amino-acid sequence, 729 residues long: 1,4-alpha-glucan branching enzyme GlgB (729 aa).

Residue Asp409 is the Nucleophile of the active site. The Proton donor role is filled by Glu462.

The protein belongs to the glycosyl hydrolase 13 family. GlgB subfamily. In terms of assembly, monomer.

The catalysed reaction is Transfers a segment of a (1-&gt;4)-alpha-D-glucan chain to a primary hydroxy group in a similar glucan chain.. It participates in glycan biosynthesis; glycogen biosynthesis. In terms of biological role, catalyzes the formation of the alpha-1,6-glucosidic linkages in glycogen by scission of a 1,4-alpha-linked oligosaccharide from growing alpha-1,4-glucan chains and the subsequent attachment of the oligosaccharide to the alpha-1,6 position. This is 1,4-alpha-glucan branching enzyme GlgB from Saccharophagus degradans (strain 2-40 / ATCC 43961 / DSM 17024).